The chain runs to 365 residues: 3-dehydroquinate synthase (365 aa).

NAD(+)-binding positions include 75-80 (DAENGK), 109-113 (GAATD), 133-134 (TT), Lys-146, and Lys-155. Positions 188, 253, and 269 each coordinate Zn(2+).

It belongs to the sugar phosphate cyclases superfamily. Dehydroquinate synthase family. The cofactor is Co(2+). Zn(2+) is required as a cofactor. Requires NAD(+) as cofactor.

The protein resides in the cytoplasm. The catalysed reaction is 7-phospho-2-dehydro-3-deoxy-D-arabino-heptonate = 3-dehydroquinate + phosphate. It participates in metabolic intermediate biosynthesis; chorismate biosynthesis; chorismate from D-erythrose 4-phosphate and phosphoenolpyruvate: step 2/7. In terms of biological role, catalyzes the conversion of 3-deoxy-D-arabino-heptulosonate 7-phosphate (DAHP) to dehydroquinate (DHQ). In Corynebacterium glutamicum (strain R), this protein is 3-dehydroquinate synthase.